The sequence spans 822 residues: Putative ESX-1 scaffolding and assembly protein SaeB (822 aa).

Functionally, may be involved in assembly of the ESX-1 / type VII specialized secretion system (T7SS), which exports several proteins including EsxA and EsxB. Involved in DNA conjugation in recipient (MDK8) but not donor (mc(2)155) strain. The chain is Putative ESX-1 scaffolding and assembly protein SaeB from Mycolicibacterium smegmatis (strain ATCC 700084 / mc(2)155) (Mycobacterium smegmatis).